The chain runs to 22 residues: Large ribosomal subunit protein bL32 (22 aa).

Residues 1–22 (CVPKRKVSPSXRNMRXAHDXLT) are disordered.

This sequence belongs to the bacterial ribosomal protein bL32 family.

The polypeptide is Large ribosomal subunit protein bL32 (rpmF) (Brevundimonas vesicularis (Pseudomonas vesicularis)).